A 111-amino-acid polypeptide reads, in one-letter code: Phosphoribosyl-ATP pyrophosphatase (111 aa).

This sequence belongs to the PRA-PH family.

The protein localises to the cytoplasm. It catalyses the reaction 1-(5-phospho-beta-D-ribosyl)-ATP + H2O = 1-(5-phospho-beta-D-ribosyl)-5'-AMP + diphosphate + H(+). It functions in the pathway amino-acid biosynthesis; L-histidine biosynthesis; L-histidine from 5-phospho-alpha-D-ribose 1-diphosphate: step 2/9. In Pseudomonas aeruginosa (strain ATCC 15692 / DSM 22644 / CIP 104116 / JCM 14847 / LMG 12228 / 1C / PRS 101 / PAO1), this protein is Phosphoribosyl-ATP pyrophosphatase (hisE).